A 938-amino-acid chain; its full sequence is Isoleucine--tRNA ligase (938 aa).

Residues 58–68 (PYANGNIHIGH) carry the 'HIGH' region motif. Glu561 is a binding site for L-isoleucyl-5'-AMP. Residues 602 to 606 (KMSKS) carry the 'KMSKS' region motif. Lys605 contributes to the ATP binding site. 4 residues coordinate Zn(2+): Cys901, Cys904, Cys921, and Cys924.

This sequence belongs to the class-I aminoacyl-tRNA synthetase family. IleS type 1 subfamily. As to quaternary structure, monomer. The cofactor is Zn(2+).

Its subcellular location is the cytoplasm. The catalysed reaction is tRNA(Ile) + L-isoleucine + ATP = L-isoleucyl-tRNA(Ile) + AMP + diphosphate. In terms of biological role, catalyzes the attachment of isoleucine to tRNA(Ile). As IleRS can inadvertently accommodate and process structurally similar amino acids such as valine, to avoid such errors it has two additional distinct tRNA(Ile)-dependent editing activities. One activity is designated as 'pretransfer' editing and involves the hydrolysis of activated Val-AMP. The other activity is designated 'posttransfer' editing and involves deacylation of mischarged Val-tRNA(Ile). This Yersinia pseudotuberculosis serotype O:1b (strain IP 31758) protein is Isoleucine--tRNA ligase.